The chain runs to 301 residues: MANITMKELLEAGVHFGHQTKRWDPRMKEYIFGERNGIYIIDLQKTLKMFKDASKYVTDMCAQGKVILFVGTKRQAQDAIAEEANRCGMYYINNRWLGGLLTNWVTVQKSVKRLQELDEMATDGRYDLLTKKEVIRLERERKHLQANLAGIKNMRRLPDAIFVVDSNNEAIAVKEARKLGIPVVAVVDTNCDPTVVDYVIPGNDDALRAIRLFTSKIADSVIEGVQMVGDKQFAAEMEGVNTDVQAVAEGEEAPAAEVAAPVAEAAAETEDVDLEAALGGGIRKSPAVVNALDEAEAAESL.

This sequence belongs to the universal ribosomal protein uS2 family.

In Acidobacterium capsulatum (strain ATCC 51196 / DSM 11244 / BCRC 80197 / JCM 7670 / NBRC 15755 / NCIMB 13165 / 161), this protein is Small ribosomal subunit protein uS2.